Reading from the N-terminus, the 424-residue chain is Serine--tRNA ligase (424 aa).

Residue 229 to 231 participates in L-serine binding; sequence TAE. ATP contacts are provided by residues 260–262 and Val-276; that span reads RTE. Glu-283 contributes to the L-serine binding site. 347 to 350 is an ATP binding site; it reads EVTS. An L-serine-binding site is contributed by Thr-382.

It belongs to the class-II aminoacyl-tRNA synthetase family. Type-1 seryl-tRNA synthetase subfamily. Homodimer. The tRNA molecule binds across the dimer.

The protein localises to the cytoplasm. The catalysed reaction is tRNA(Ser) + L-serine + ATP = L-seryl-tRNA(Ser) + AMP + diphosphate + H(+). The enzyme catalyses tRNA(Sec) + L-serine + ATP = L-seryl-tRNA(Sec) + AMP + diphosphate + H(+). It participates in aminoacyl-tRNA biosynthesis; selenocysteinyl-tRNA(Sec) biosynthesis; L-seryl-tRNA(Sec) from L-serine and tRNA(Sec): step 1/1. In terms of biological role, catalyzes the attachment of serine to tRNA(Ser). Is also able to aminoacylate tRNA(Sec) with serine, to form the misacylated tRNA L-seryl-tRNA(Sec), which will be further converted into selenocysteinyl-tRNA(Sec). This is Serine--tRNA ligase from Rubrobacter xylanophilus (strain DSM 9941 / JCM 11954 / NBRC 16129 / PRD-1).